The primary structure comprises 123 residues: Methylmalonyl-CoA carboxyltransferase 1.3S subunit (123 aa).

Positions 46–123 (GAGAGKAGEG…QGGQGLIKIG (78 aa)) constitute a Biotinyl-binding domain. The residue at position 89 (Lys-89) is an N6-biotinyllysine.

As to quaternary structure, transcarboxylase is composed of three subunits: 1.3S, 5S, and 12S. The core of the enzyme is composed of six 12S subunits. On each side of the core there are three pairs of 5S subunits. Each 5S dimer is attached to the core by two 1.3S subunits. Thus the total number of chains is 30 (6 + 12 + 12).

It carries out the reaction (S)-methylmalonyl-CoA + pyruvate = propanoyl-CoA + oxaloacetate. In terms of biological role, the biotinyl 1.3S subunit serves as a carboxyl carrier between the substrate-binding sites on the 12S and 5S subunits. The chain is Methylmalonyl-CoA carboxyltransferase 1.3S subunit from Propionibacterium freudenreichii subsp. shermanii.